The chain runs to 765 residues: LPS-assembly protein LptD (765 aa).

Residues 1 to 18 form the signal peptide; it reads MQIRYFLALSLLPQVVLA.

This sequence belongs to the LptD family. In terms of assembly, component of the lipopolysaccharide transport and assembly complex. Interacts with LptE and LptA.

It localises to the cell outer membrane. Its function is as follows. Together with LptE, is involved in the assembly of lipopolysaccharide (LPS) at the surface of the outer membrane. This Shewanella sp. (strain ANA-3) protein is LPS-assembly protein LptD.